The chain runs to 141 residues: Histone H2B (141 aa).

Basic and acidic residues predominate over residues 1–10; the sequence is MAPKAAEKKP. Residues 1–49 form a disordered region; it reads MAPKAAEKKPSTGGKAPAGGKAPAEKKEAGKKTAAAASGDKKKRGKTRK. 2 positions are modified to N6-acetyllysine; alternate: K8 and K9. Residues K8 and K9 each participate in a glycyl lysine isopeptide (Lys-Gly) (interchain with G-Cter in SUMO); alternate cross-link. Low complexity predominate over residues 11-22; it reads STGGKAPAGGKA. K15 carries the N6-acetyllysine modification. K26 carries the N6-acetyllysine; alternate modification. K26 is covalently cross-linked (Glycyl lysine isopeptide (Lys-Gly) (interchain with G-Cter in SUMO); alternate). K27 participates in a covalent cross-link: Glycyl lysine isopeptide (Lys-Gly) (interchain with G-Cter in SUMO). K135 is covalently cross-linked (Glycyl lysine isopeptide (Lys-Gly) (interchain with G-Cter in ubiquitin)).

This sequence belongs to the histone H2B family. The nucleosome is a histone octamer containing two molecules each of H2A, H2B, H3 and H4 assembled in one H3-H4 heterotetramer and two H2A-H2B heterodimers. The octamer wraps approximately 147 bp of DNA. In terms of processing, monoubiquitinated by the ubc2-bre1 complex to form H2BK123ub1. H2BK123ub1 gives a specific tag for epigenetic transcriptional activation and is also prerequisite for H3K4me and H3K79me formation. H2BK123ub1 also modulates the formation of double-strand breaks during meiosis and is a prerequisite for DNA-damage checkpoint activation. Post-translationally, acetylated by gcn5 to form H2BK11ac and H2BK16ac. H2BK16ac can also be formed by esa1. Acetylation of N-terminal lysines and particularly formation of H2BK11acK16ac has a positive effect on transcription. Sumoylation to form H2BK6su or H2BK7su, and probably also H2BK16su or H2BK17su, occurs preferentially near the telomeres and represses gene transcription.

Its subcellular location is the nucleus. It is found in the chromosome. In terms of biological role, core component of nucleosome. Nucleosomes wrap and compact DNA into chromatin, limiting DNA accessibility to the cellular machineries which require DNA as a template. Histones thereby play a central role in transcription regulation, DNA repair, DNA replication and chromosomal stability. DNA accessibility is regulated via a complex set of post-translational modifications of histones, also called histone code, and nucleosome remodeling. This is Histone H2B (htb1) from Aspergillus oryzae (strain ATCC 42149 / RIB 40) (Yellow koji mold).